Reading from the N-terminus, the 193-residue chain is ATP-dependent Clp protease proteolytic subunit (193 aa).

The active-site Nucleophile is the S98. H123 is an active-site residue.

Belongs to the peptidase S14 family. Fourteen ClpP subunits assemble into 2 heptameric rings which stack back to back to give a disk-like structure with a central cavity, resembling the structure of eukaryotic proteasomes.

It localises to the cytoplasm. The catalysed reaction is Hydrolysis of proteins to small peptides in the presence of ATP and magnesium. alpha-casein is the usual test substrate. In the absence of ATP, only oligopeptides shorter than five residues are hydrolyzed (such as succinyl-Leu-Tyr-|-NHMec, and Leu-Tyr-Leu-|-Tyr-Trp, in which cleavage of the -Tyr-|-Leu- and -Tyr-|-Trp bonds also occurs).. Its function is as follows. Cleaves peptides in various proteins in a process that requires ATP hydrolysis. Has a chymotrypsin-like activity. Plays a major role in the degradation of misfolded proteins. ClpXP is involved in the complete degradation of the Site-2 clipped anti-sigma-W factor RsiW. This results in the release of SigW and the transcription activation of the genes under the control of the sigma-W factor. The polypeptide is ATP-dependent Clp protease proteolytic subunit (Oceanobacillus iheyensis (strain DSM 14371 / CIP 107618 / JCM 11309 / KCTC 3954 / HTE831)).